A 687-amino-acid polypeptide reads, in one-letter code: Mu-like prophage FluMu transposase A (687 aa).

In terms of domain architecture, HTH Mu-type spans 8-74 (THYSVYELAN…ELLLKTTPEQ (67 aa)). A DNA-binding region (H-T-H motif) is located at residues 398-417 (PIERAFSHGGLGDYVDKHLL).

Its function is as follows. This transposase is essential for integration, replication-transposition, and excision of Mu-like viral DNA. The protein is Mu-like prophage FluMu transposase A of Haemophilus influenzae (strain ATCC 51907 / DSM 11121 / KW20 / Rd).